The sequence spans 308 residues: Protein translocase subunit SecF (308 aa).

The next 6 membrane-spanning stretches (helical) occupy residues 28-48 (SIIL…NFGI), 140-160 (IEAG…YIWV), 164-184 (WYFG…ALGF), 194-214 (LSTI…SVVI), 246-266 (ILTV…GGEA), and 272-292 (VLVF…SAPI).

Belongs to the SecD/SecF family. SecF subfamily. Forms a complex with SecD. Part of the essential Sec protein translocation apparatus which comprises SecA, SecYEG and auxiliary proteins SecDF-YajC and YidC.

Its subcellular location is the cell inner membrane. Part of the Sec protein translocase complex. Interacts with the SecYEG preprotein conducting channel. SecDF uses the proton motive force (PMF) to complete protein translocation after the ATP-dependent function of SecA. This chain is Protein translocase subunit SecF, found in Rickettsia felis (strain ATCC VR-1525 / URRWXCal2) (Rickettsia azadi).